A 109-amino-acid polypeptide reads, in one-letter code: Thiosulfate sulfurtransferase GlpE (109 aa).

Positions 17–105 constitute a Rhodanese domain; it reads HQQTAVLVDI…WHRHFPAEVA (89 aa). Cysteine 65 serves as the catalytic Cysteine persulfide intermediate.

The protein belongs to the GlpE family.

Its subcellular location is the cytoplasm. It catalyses the reaction thiosulfate + hydrogen cyanide = thiocyanate + sulfite + 2 H(+). The catalysed reaction is thiosulfate + [thioredoxin]-dithiol = [thioredoxin]-disulfide + hydrogen sulfide + sulfite + 2 H(+). Its function is as follows. Transferase that catalyzes the transfer of sulfur from thiosulfate to thiophilic acceptors such as cyanide or dithiols. May function in a CysM-independent thiosulfate assimilation pathway by catalyzing the conversion of thiosulfate to sulfite, which can then be used for L-cysteine biosynthesis. The polypeptide is Thiosulfate sulfurtransferase GlpE (Klebsiella pneumoniae (strain 342)).